A 112-amino-acid chain; its full sequence is MSELASMKCEACQADAPKVTDAELAELIRMIPDWSVQVRDGIMQLERVYKFKNFKLAMAFSNKLAELAEEEFHHPGIFTEWGKVTVTWWSHSIKGLHRNDFIMAAKTDQLLD.

Belongs to the pterin-4-alpha-carbinolamine dehydratase family.

It catalyses the reaction (4aS,6R)-4a-hydroxy-L-erythro-5,6,7,8-tetrahydrobiopterin = (6R)-L-erythro-6,7-dihydrobiopterin + H2O. The protein is Putative pterin-4-alpha-carbinolamine dehydratase of Shewanella amazonensis (strain ATCC BAA-1098 / SB2B).